The primary structure comprises 194 residues: Probable proteasome subunit beta type-4 (194 aa).

The protein belongs to the peptidase T1B family. As to quaternary structure, the 26S proteasome consists of a 20S proteasome core and two 19S regulatory subunits. The 20S proteasome core is composed of 28 subunits that are arranged in four stacked rings, resulting in a barrel-shaped structure. The two end rings are each formed by seven alpha subunits, and the two central rings are each formed by seven beta subunits. The catalytic chamber with the active sites is on the inside of the barrel.

The protein localises to the cytoplasm. Its subcellular location is the nucleus. Its function is as follows. Non-catalytic component of the proteasome, a multicatalytic proteinase complex which is characterized by its ability to cleave peptides with Arg, Phe, Tyr, Leu, and Glu adjacent to the leaving group at neutral or slightly basic pH. The proteasome has an ATP-dependent proteolytic activity. The sequence is that of Probable proteasome subunit beta type-4 from Schizosaccharomyces pombe (strain 972 / ATCC 24843) (Fission yeast).